Here is a 434-residue protein sequence, read N- to C-terminus: Arrestin domain-containing protein 1 (434 aa).

The interval Ser292–Ser349 is disordered. The span at Val330–Leu343 shows a compositional bias: polar residues. Short sequence motifs (PPxY motif) lie at residues Pro401–Tyr404 and Pro414–Tyr417.

This sequence belongs to the arrestin family. As to quaternary structure, interacts (via PPxY motifs) with ITCH (via WW domains); the interaction is direct and participates in the recruitment of the ubiquitin-protein ligase ITCH to the NOTCH1 receptor. Interacts with ARRB1 and ARRB2; the interaction is direct. Interacts with TSG101; may recruit TSG101 to the plasma membrane. Interacts (via PPxY motifs) with WWP2 (via WW domains); ubiquitinates ARRDC1. Interacts with SLC11A2; controls the incorporation of SLC11A2 into extracellular vesicles through an ubiquitination-dependent mechanism. Interacts with WWP1 (via WW domains). Interacts with NEDD4 (via WW domains). Interacts with PDCD6IP. Ubiquitinated. Ubiquitination by WWP2; promotes localization to extracellular microvesicles. Ubiquitinated by WWP1.

It is found in the cell membrane. Functionally, functions as an adapter recruiting ubiquitin-protein ligases to their specific substrates. Through an ubiquitination-dependent mechanism plays for instance a role in the incorporation of SLC11A2 into extracellular vesicles. More generally, plays a role in the extracellular transport of proteins between cells through the release in the extracellular space of microvesicles. By participating to the ITCH-mediated ubiquitination and subsequent degradation of NOTCH1, negatively regulates the NOTCH signaling pathway. The sequence is that of Arrestin domain-containing protein 1 from Mus musculus (Mouse).